We begin with the raw amino-acid sequence, 162 residues long: NADH-quinone oxidoreductase subunit I (162 aa).

2 consecutive 4Fe-4S ferredoxin-type domains span residues 54–83 (RRYE…INST) and 93–122 (SSYE…ETNI). [4Fe-4S] cluster-binding residues include Cys63, Cys66, Cys69, Cys73, Cys102, Cys105, Cys108, and Cys112.

This sequence belongs to the complex I 23 kDa subunit family. In terms of assembly, NDH-1 is composed of 14 different subunits. Subunits NuoA, H, J, K, L, M, N constitute the membrane sector of the complex. It depends on [4Fe-4S] cluster as a cofactor.

It is found in the cell inner membrane. The enzyme catalyses a quinone + NADH + 5 H(+)(in) = a quinol + NAD(+) + 4 H(+)(out). In terms of biological role, NDH-1 shuttles electrons from NADH, via FMN and iron-sulfur (Fe-S) centers, to quinones in the respiratory chain. The immediate electron acceptor for the enzyme in this species is believed to be ubiquinone. Couples the redox reaction to proton translocation (for every two electrons transferred, four hydrogen ions are translocated across the cytoplasmic membrane), and thus conserves the redox energy in a proton gradient. The sequence is that of NADH-quinone oxidoreductase subunit I from Francisella tularensis subsp. holarctica (strain FTNF002-00 / FTA).